Reading from the N-terminus, the 183-residue chain is Adenine phosphoribosyltransferase (183 aa).

Belongs to the purine/pyrimidine phosphoribosyltransferase family. Homodimer.

It is found in the cytoplasm. It carries out the reaction AMP + diphosphate = 5-phospho-alpha-D-ribose 1-diphosphate + adenine. It participates in purine metabolism; AMP biosynthesis via salvage pathway; AMP from adenine: step 1/1. Catalyzes a salvage reaction resulting in the formation of AMP, that is energically less costly than de novo synthesis. The protein is Adenine phosphoribosyltransferase of Edwardsiella ictaluri (strain 93-146).